The following is a 392-amino-acid chain: Probable myosin light chain kinase DDB_G0271550 (392 aa).

The region spanning 20-278 is the Protein kinase domain; that stretch reads YEFGPEIGRG…ASQCIKHPWL (259 aa). Residues 26–34 and lysine 49 contribute to the ATP site; that span reads IGRGAFSIV. Aspartate 142 acts as the Proton acceptor in catalysis. A compositionally biased stretch (polar residues) spans 317–326; it reads SQSTPNLHSA. A disordered region spans residues 317-392; it reads SQSTPNLHSA…NNNNNNNNNI (76 aa). Over residues 327–392 the composition is skewed to low complexity; that stretch reads NSNTNTNSLS…NNNNNNNNNI (66 aa).

This sequence belongs to the protein kinase superfamily. CAMK Ser/Thr protein kinase family. CaMK subfamily.

The catalysed reaction is L-seryl-[myosin light chain] + ATP = O-phospho-L-seryl-[myosin light chain] + ADP + H(+). It catalyses the reaction L-threonyl-[myosin light chain] + ATP = O-phospho-L-threonyl-[myosin light chain] + ADP + H(+). Its function is as follows. May phosphorylate a specific serine in the N-terminus of a myosin light chain. In Dictyostelium discoideum (Social amoeba), this protein is Probable myosin light chain kinase DDB_G0271550.